Here is a 548-residue protein sequence, read N- to C-terminus: Phosphoglucomutase (548 aa).

Catalysis depends on Ser-135, which acts as the Phosphoserine intermediate. 4 residues coordinate Mg(2+): Ser-135, Asp-288, Asp-290, and Asp-292.

It belongs to the phosphohexose mutase family. It depends on Mg(2+) as a cofactor.

The catalysed reaction is alpha-D-glucose 1-phosphate = alpha-D-glucose 6-phosphate. The protein operates within glycolipid metabolism; diglucosyl-diacylglycerol biosynthesis. In terms of biological role, catalyzes the interconversion between glucose-6-phosphate and alpha-glucose-1-phosphate. This is the first step in the biosynthesis of diglucosyl-diacylglycerol (Glc2-DAG), i.e. a glycolipid found in the membrane, which is also used as a membrane anchor for lipoteichoic acid (LTA). The sequence is that of Phosphoglucomutase (pgcA) from Staphylococcus haemolyticus (strain JCSC1435).